Consider the following 143-residue polypeptide: Mini-ribonuclease 3 (143 aa).

Residue Asp-23 is part of the active site.

It belongs to the MrnC RNase family. In terms of assembly, homodimer. It depends on Mg(2+) as a cofactor.

It localises to the cytoplasm. In terms of biological role, involved in correct processing of both the 5' and 3' ends of 23S rRNA precursor. Processes 30S rRNA precursor transcript even in absence of ribonuclease 3 (Rnc); Rnc processes 30S rRNA into smaller rRNA precursors. Cleaves more efficiently on assembled 50S ribosomal subunits. Cleavage is strongly stimulated by ribosomal protein L3 (RplC); 20-30% DMSO can replace RplC, suggesting RplC may alter rRNA conformation. The chain is Mini-ribonuclease 3 (mrnC) from Bacillus subtilis (strain 168).